A 298-amino-acid polypeptide reads, in one-letter code: GTPase Era (298 aa).

One can recognise an Era-type G domain in the interval 3–170 (KSGFVAILGR…IKLLTDNLEE (168 aa)). The interval 11–18 (GRPNVGKS) is G1. 11–18 (GRPNVGKS) contacts GTP. The G2 stretch occupies residues 37–41 (QTTRN). The tract at residues 58–61 (DTPG) is G3. Residues 58–62 (DTPGI) and 120–123 (NKID) each bind GTP. The tract at residues 120–123 (NKID) is G4. The segment at 149–151 (ISA) is G5. The region spanning 201 to 279 (TQQEVPHSVA…YLETWVKVKK (79 aa)) is the KH type-2 domain.

It belongs to the TRAFAC class TrmE-Era-EngA-EngB-Septin-like GTPase superfamily. Era GTPase family. Monomer.

The protein localises to the cytoplasm. It localises to the cell membrane. Its function is as follows. An essential GTPase that binds both GDP and GTP, with rapid nucleotide exchange. Plays a role in 16S rRNA processing and 30S ribosomal subunit biogenesis and possibly also in cell cycle regulation and energy metabolism. The protein is GTPase Era of Streptococcus pyogenes serotype M3 (strain ATCC BAA-595 / MGAS315).